Here is a 185-residue protein sequence, read N- to C-terminus: Ribosome maturation factor RimM (185 aa).

The 80-residue stretch at 106-185 folds into the PRC barrel domain; that stretch reads EGDYYWKDLM…SIEVDWDPGF (80 aa).

This sequence belongs to the RimM family. Binds ribosomal protein uS19.

Its subcellular location is the cytoplasm. An accessory protein needed during the final step in the assembly of 30S ribosomal subunit, possibly for assembly of the head region. Essential for efficient processing of 16S rRNA. May be needed both before and after RbfA during the maturation of 16S rRNA. It has affinity for free ribosomal 30S subunits but not for 70S ribosomes. This is Ribosome maturation factor RimM from Shigella dysenteriae serotype 1 (strain Sd197).